The chain runs to 107 residues: Probable 4-amino-4-deoxy-L-arabinose-phosphoundecaprenol flippase subunit ArnE (107 aa).

An EamA domain is found at 31–105 (RVWGWLALSL…IIVGIILLGG (75 aa)). A run of 3 helical transmembrane segments spans residues 34–54 (GWLA…LFVL), 57–77 (VPVS…TLAA), and 85–105 (IALR…LLGG).

It belongs to the ArnE family. In terms of assembly, heterodimer of ArnE and ArnF.

It is found in the cell inner membrane. It participates in bacterial outer membrane biogenesis; lipopolysaccharide biosynthesis. Translocates 4-amino-4-deoxy-L-arabinose-phosphoundecaprenol (alpha-L-Ara4N-phosphoundecaprenol) from the cytoplasmic to the periplasmic side of the inner membrane. This Enterobacter sp. (strain 638) protein is Probable 4-amino-4-deoxy-L-arabinose-phosphoundecaprenol flippase subunit ArnE.